A 319-amino-acid polypeptide reads, in one-letter code: Acetyl-coenzyme A carboxylase carboxyl transferase subunit alpha (319 aa).

One can recognise a CoA carboxyltransferase C-terminal domain in the interval 32–293; the sequence is NVETEVRALR…KAVLLNELDA (262 aa).

This sequence belongs to the AccA family. Acetyl-CoA carboxylase is a heterohexamer composed of biotin carboxyl carrier protein (AccB), biotin carboxylase (AccC) and two subunits each of ACCase subunit alpha (AccA) and ACCase subunit beta (AccD).

The protein resides in the cytoplasm. The catalysed reaction is N(6)-carboxybiotinyl-L-lysyl-[protein] + acetyl-CoA = N(6)-biotinyl-L-lysyl-[protein] + malonyl-CoA. Its pathway is lipid metabolism; malonyl-CoA biosynthesis; malonyl-CoA from acetyl-CoA: step 1/1. Functionally, component of the acetyl coenzyme A carboxylase (ACC) complex. First, biotin carboxylase catalyzes the carboxylation of biotin on its carrier protein (BCCP) and then the CO(2) group is transferred by the carboxyltransferase to acetyl-CoA to form malonyl-CoA. This chain is Acetyl-coenzyme A carboxylase carboxyl transferase subunit alpha, found in Xanthomonas axonopodis pv. citri (strain 306).